The sequence spans 832 residues: Protein P (832 aa).

Residues 1 to 177 (MPLSYQHFRK…FCGSPYSWEQ (177 aa)) are terminal protein domain (TP). The tract at residues 178 to 335 (ELQHGAESFH…YCLSHLVSLL (158 aa)) is spacer. The tract at residues 336–679 (DDWGPCTEHG…YSTLYPVARQ (344 aa)) is polymerase/reverse transcriptase domain (RT). Residues 346–589 (EHHIRIPRTP…YSLHFMGYVI (244 aa)) enclose the Reverse transcriptase domain. Mg(2+)-binding residues include aspartate 418, aspartate 540, and aspartate 541.

Belongs to the hepadnaviridae P protein family.

The catalysed reaction is DNA(n) + a 2'-deoxyribonucleoside 5'-triphosphate = DNA(n+1) + diphosphate. It carries out the reaction Endonucleolytic cleavage to 5'-phosphomonoester.. Its activity is regulated as follows. Activated by host HSP70 and HSP40 in vitro to be able to bind the epsilon loop of the pgRNA. Because deletion of the RNase H region renders the protein partly chaperone-independent, the chaperones may be needed indirectly to relieve occlusion of the RNA-binding site by this domain. Inhibited by several reverse-transcriptase inhibitors: Lamivudine, Adefovir and Entecavir. Functionally, multifunctional enzyme that converts the viral RNA genome into dsDNA in viral cytoplasmic capsids. This enzyme displays a DNA polymerase activity that can copy either DNA or RNA templates, and a ribonuclease H (RNase H) activity that cleaves the RNA strand of RNA-DNA heteroduplexes in a partially processive 3'- to 5'-endonucleasic mode. Neo-synthesized pregenomic RNA (pgRNA) are encapsidated together with the P protein, and reverse-transcribed inside the nucleocapsid. Initiation of reverse-transcription occurs first by binding the epsilon loop on the pgRNA genome, and is initiated by protein priming, thereby the 5'-end of (-)DNA is covalently linked to P protein. Partial (+)DNA is synthesized from the (-)DNA template and generates the relaxed circular DNA (RC-DNA) genome. After budding and infection, the RC-DNA migrates in the nucleus, and is converted into a plasmid-like covalently closed circular DNA (cccDNA). The activity of P protein does not seem to be necessary for cccDNA generation, and is presumably released from (+)DNA by host nuclear DNA repair machinery. The chain is Protein P from Pan troglodytes (Chimpanzee).